A 2282-amino-acid chain; its full sequence is Serine/threonine-protein kinase TEL1 (2282 aa).

The FAT domain maps to 1325–1844; that stretch reads EIVNSALTLH…LYQISSLMRT (520 aa). Residues 1939 to 2250 enclose the PI3K/PI4K catalytic domain; the sequence is VLAQVIKAGG…LSGVKGKLAV (312 aa). Residues 1945–1951 are G-loop; that stretch reads KAGGISH. The catalytic loop stretch occupies residues 2115–2123; that stretch reads GIGDRHCNN. The segment at 2135–2159 is activation loop; the sequence is HIDLGISFDQGKNLTVPEKVPFRLT. One can recognise an FATC domain in the interval 2250 to 2282; the sequence is VRLSTEAVVRELIGEAVSVENLAVIFHGWTPFY.

Belongs to the PI3/PI4-kinase family. ATM subfamily. As to quaternary structure, associates with DNA double-strand breaks.

The protein resides in the nucleus. It is found in the chromosome. It localises to the telomere. It carries out the reaction L-seryl-[protein] + ATP = O-phospho-L-seryl-[protein] + ADP + H(+). The enzyme catalyses L-threonyl-[protein] + ATP = O-phospho-L-threonyl-[protein] + ADP + H(+). Functionally, serine/threonine protein kinase which activates checkpoint signaling upon genotoxic stresses such as ionizing radiation (IR), ultraviolet light (UV), or DNA replication stalling, thereby acting as a DNA damage sensor. Recognizes the substrate consensus sequence [ST]-Q. Phosphorylates histone H2A to form H2AS128ph (gamma-H2A) at sites of DNA damage, involved in the regulation of DNA damage response mechanism. Required for the control of telomere length and genome stability. This is Serine/threonine-protein kinase TEL1 (TEL1) from Yarrowia lipolytica (strain CLIB 122 / E 150) (Yeast).